A 531-amino-acid chain; its full sequence is MVDVGKWPIFTLLSPQEAGSIRKACVFGTSANEAIYVTDNDEVFVFGLNYSNCLGTGDNQSTLVPKKLEALCGKKIKSLSYGSGPHVLLTTEDGVVYAWGHNGYSQLGNGTTNQGIAPVQVCTNLLIKQVIEVACGSHHSMALAADGELFAWGYNNCGQVGSGSTANQPTPRKVTNCLHTKRVVNIACGQTSSMAVLDSGEVYGWGYNGNGQLGLGNNGNQLTPVRVAALHGMCVNQIVCGYAHTLALTDEGLLYAWGANTYGQLGTGSKNNLLSPTQIMVEKERVIEIAACHSTHTSAAKTQGGHVYMWGQCRGQSVILPHLTHFCCTDDVFACFGTPAVSWRLLSVEHEDFLTVAESLKKEFDSPEIADLKFRIDGKYIHVHKAVLKIRCEHFRSMFQSYWNEDMKEVIEIDQFSYPVYRAFLQYLYTDTVDLPPEDAIGLLDLATSYCENRLKRLCQHIIKRGITVENAFSLFSAAVRYDAEDLEEFCFKFCINHLTEVTQTAAFWQMDGPLLKEFIAKASKCGAFKN.

6 RCC1 repeats span residues N40–T91, D93–A145, G147–D198, S199–D250, G252–T302, and G304–V356. 2 BTB domains span residues A370–P437 and E470–L499.

As to expression, in the retina, mainly expressed in the inner retina with strong signals reaching up to the outer plexiform layer (at protein level).

Its subcellular location is the nucleus. Its function is as follows. May be involved in cell cycle regulation by chromatin remodeling. The protein is RCC1 and BTB domain-containing protein 1 (Rcbtb1) of Mus musculus (Mouse).